Consider the following 778-residue polypeptide: Lon protease (778 aa).

In terms of domain architecture, Lon N-terminal spans Leu-8 to Leu-202. Gly-354–Thr-361 contacts ATP. A Lon proteolytic domain is found at Glu-591–Gly-772. Catalysis depends on residues Ser-678 and Lys-721.

This sequence belongs to the peptidase S16 family. As to quaternary structure, homohexamer. Organized in a ring with a central cavity.

Its subcellular location is the cytoplasm. It carries out the reaction Hydrolysis of proteins in presence of ATP.. ATP-dependent serine protease that mediates the selective degradation of mutant and abnormal proteins as well as certain short-lived regulatory proteins. Required for cellular homeostasis and for survival from DNA damage and developmental changes induced by stress. Degrades polypeptides processively to yield small peptide fragments that are 5 to 10 amino acids long. Binds to DNA in a double-stranded, site-specific manner. The sequence is that of Lon protease from Clostridium acetobutylicum (strain ATCC 824 / DSM 792 / JCM 1419 / IAM 19013 / LMG 5710 / NBRC 13948 / NRRL B-527 / VKM B-1787 / 2291 / W).